The primary structure comprises 214 residues: Chalcone isomerase-like protein 1 (214 aa).

It belongs to the chalcone isomerase family. As to expression, mostly expressed in glandular trichomes (lupulin glands), and, to a lower extent, in cones, cones bracts, leaves, stems and roots.

Its subcellular location is the cytoplasm. The catalysed reaction is a chalcone = a flavanone.. Its pathway is secondary metabolite biosynthesis; flavonoid biosynthesis. Functionally, involved in the biosynthesis of prenylated phenolics natural products which contribute to the bitter taste of beer and display broad biological activities. Involved in anthocyanin biosynthesis. Polyketide binding proteins (PBP) which reduces the catalytic activities of CHS_H1 and PT1L and prevents demethylxanthohumol (DMX) production, by binding to DMX and naringenin chalcone (NC) to stabilize the chalconoids ring-opened structure. In Humulus lupulus (European hop), this protein is Chalcone isomerase-like protein 1.